The following is a 274-amino-acid chain: Cytochrome c oxidase subunit 3 (274 aa).

Residues 2 to 15 (AHVKNHDYQILPPS) are Cytoplasmic-facing. The chain crosses the membrane as a helical span at residues 16 to 36 (IWPFFGAIGAFVMLTGAVAWM). Residues 37-48 (KGITFFGLPVEG) are Periplasmic-facing. The helical transmembrane segment at 49 to 77 (PWMFLIGLVGVLYVMFGWWADVVNEGETG) threads the bilayer. Residues 78–79 (EH) are Cytoplasmic-facing. The helical transmembrane segment at 80 to 115 (TPVVRIGLQYGFILFIMSEVMFFVAWFWAFIKNALY) threads the bilayer. Residues 116–139 (PMGPDSPIKDGVWPPEGIVTFDPW) lie on the Periplasmic side of the membrane. Residues 140-166 (HLPLINTLILLLSGVAVTWAHHAFVLE) traverse the membrane as a helical segment. The Cytoplasmic portion of the chain corresponds to 167–168 (GD). Residues 169 to 197 (RKTTINGLIVAVILGVCFTGLQAYEYSHA) form a helical membrane-spanning segment. Topologically, residues 198–203 (AFGLAD) are periplasmic. A helical membrane pass occupies residues 204 to 237 (TVYAGAFYMATGFHGAHVIIGTIFLFVCLIRLLK). At 238–244 (GQMTQKQ) the chain is on the cytoplasmic side. Residues 245–274 (HVGFEAAAWYWHFVDVVWLFLFVVIYIWGR) traverse the membrane as a helical segment.

It belongs to the cytochrome c oxidase subunit 3 family.

The protein localises to the cell inner membrane. It catalyses the reaction 4 Fe(II)-[cytochrome c] + O2 + 8 H(+)(in) = 4 Fe(III)-[cytochrome c] + 2 H2O + 4 H(+)(out). This Paracoccus denitrificans protein is Cytochrome c oxidase subunit 3 (ctaE).